The following is a 445-amino-acid chain: mRNA cleavage and polyadenylation factor CLP1 (445 aa).

ATP-binding positions include glutamate 33 and 131–136; that span reads SSGKTS.

It belongs to the Clp1 family. Clp1 subfamily. In terms of assembly, component of a pre-mRNA cleavage factor complex. Interacts directly with PCF11.

The protein resides in the nucleus. Functionally, required for endonucleolytic cleavage during polyadenylation-dependent pre-mRNA 3'-end formation. This is mRNA cleavage and polyadenylation factor CLP1 from Eremothecium gossypii (strain ATCC 10895 / CBS 109.51 / FGSC 9923 / NRRL Y-1056) (Yeast).